Consider the following 309-residue polypeptide: Ribonuclease Z (309 aa).

Residues His63, His65, Asp67, His68, His145, Asp216, and His274 each contribute to the Zn(2+) site. The Proton acceptor role is filled by Asp67.

Belongs to the RNase Z family. Homodimer. Requires Zn(2+) as cofactor.

It carries out the reaction Endonucleolytic cleavage of RNA, removing extra 3' nucleotides from tRNA precursor, generating 3' termini of tRNAs. A 3'-hydroxy group is left at the tRNA terminus and a 5'-phosphoryl group is left at the trailer molecule.. Its function is as follows. Zinc phosphodiesterase, which displays some tRNA 3'-processing endonuclease activity. Probably involved in tRNA maturation, by removing a 3'-trailer from precursor tRNA. The chain is Ribonuclease Z from Streptococcus thermophilus (strain CNRZ 1066).